Reading from the N-terminus, the 51-residue chain is Large ribosomal subunit protein eL39 (51 aa).

This sequence belongs to the eukaryotic ribosomal protein eL39 family.

This is Large ribosomal subunit protein eL39 from Thermococcus sibiricus (strain DSM 12597 / MM 739).